The primary structure comprises 94 residues: Co-chaperonin GroES (94 aa).

It belongs to the GroES chaperonin family. As to quaternary structure, heptamer of 7 subunits arranged in a ring. Interacts with the chaperonin GroEL.

It is found in the cytoplasm. Together with the chaperonin GroEL, plays an essential role in assisting protein folding. The GroEL-GroES system forms a nano-cage that allows encapsulation of the non-native substrate proteins and provides a physical environment optimized to promote and accelerate protein folding. GroES binds to the apical surface of the GroEL ring, thereby capping the opening of the GroEL channel. The protein is Co-chaperonin GroES of Brevibacillus choshinensis.